The primary structure comprises 176 residues: ATP-dependent protease subunit HslV (176 aa).

T5 is an active-site residue. Residues S161, C164, and T167 each coordinate Na(+).

It belongs to the peptidase T1B family. HslV subfamily. As to quaternary structure, a double ring-shaped homohexamer of HslV is capped on each side by a ring-shaped HslU homohexamer. The assembly of the HslU/HslV complex is dependent on binding of ATP.

The protein localises to the cytoplasm. The enzyme catalyses ATP-dependent cleavage of peptide bonds with broad specificity.. With respect to regulation, allosterically activated by HslU binding. Its function is as follows. Protease subunit of a proteasome-like degradation complex believed to be a general protein degrading machinery. This is ATP-dependent protease subunit HslV from Desulfitobacterium hafniense (strain Y51).